A 205-amino-acid chain; its full sequence is Anaerobic dimethyl sulfoxide reductase chain B (205 aa).

3 consecutive 4Fe-4S ferredoxin-type domains span residues 4-32 (YGFY…LGTE), 57-89 (NIFA…KNAD), and 90-119 (GFVI…YDAQ). Residues cysteine 13, cysteine 16, cysteine 19, cysteine 23, cysteine 67, cysteine 70, cysteine 75, cysteine 79, cysteine 99, cysteine 102, cysteine 105, cysteine 109, cysteine 126, cysteine 129, cysteine 141, and cysteine 145 each contribute to the [4Fe-4S] cluster site.

In terms of assembly, heterotrimeric enzyme composed of a catalytic heterodimer (DmsAB) and a membrane anchor protein (DmsC). [4Fe-4S] cluster serves as cofactor.

In terms of biological role, electron transfer subunit of the terminal reductase during anaerobic growth on various sulfoxide and N-oxide compounds. The polypeptide is Anaerobic dimethyl sulfoxide reductase chain B (dmsB) (Haemophilus influenzae (strain ATCC 51907 / DSM 11121 / KW20 / Rd)).